The sequence spans 464 residues: Lysosomal proton-coupled steroid conjugate and bile acid symporter SLC46A3 (464 aa).

Residues 1 to 26 (MRKVLLVEPVIFIYIFASSLTSPVVQ) form the signal peptide. Topologically, residues 27 to 71 (QFIYRKLWEEEYNSTAISSDNSSHCERNKSSPTYVMEKAIQEKTS) are extracellular. N39, N47, and N54 each carry an N-linked (GlcNAc...) asparagine glycan. A helical transmembrane segment spans residues 72–92 (FFNMQLDLTGAVPSLIVAFII). At 93 to 104 (VANGDHQGRKKS) the chain is on the cytoplasmic side. A helical transmembrane segment spans residues 105–125 (LVLPSIGALIADIFLTIVSYF). The Extracellular segment spans residues 126-130 (SWPTS). A helical transmembrane segment spans residues 131–151 (VLFLATFISGLFGSMATFLGG). Residues 152 to 171 (GFAYIADQCHDEKQKTTRIA) are Cytoplasmic-facing. A helical transmembrane segment spans residues 172 to 192 (VIDLIFGVVSGLAGLSSGYFL). Residues 193-198 (REMGFT) are Extracellular-facing. The chain crosses the membrane as a helical span at residues 199–219 (WTFATASLLHVVNIIYITFFL). Over 220 to 259 (QDTVHISEFQQQAPLSYKEHLKETFSGVYMLFKTAPSKKR) the chain is Cytoplasmic. The helical transmembrane segment at 260–280 (ILIIVLLFIFMTYLFTMFGGS) threads the bilayer. Residues 281–296 (SLFTLYELDEPLCWTE) are Extracellular-facing. The chain crosses the membrane as a helical span at residues 297 to 317 (VYIGYGAAAFTSISLTSFLGV). Residues 318–326 (YLFSKCLKD) lie on the Cytoplasmic side of the membrane. Residues 327 to 347 (IYIVFIGIFSYIGGIVMAAFA) form a helical membrane-spanning segment. Residues 348–349 (KT) are Extracellular-facing. The helical transmembrane segment at 350–370 (TLLMFLVRVPSLFSIMPIPVL) threads the bilayer. The Cytoplasmic portion of the chain corresponds to 371–384 (RSMLSKVVLPSEQG). A helical membrane pass occupies residues 385 to 405 (AVFACIACLEVLTGTISLSVF). Residues 406-418 (NVIYAATVAWFSG) are Extracellular-facing. Residues 419-439 (FSFLLSASLCLIPLGVLCWLL) form a helical membrane-spanning segment. The Cytoplasmic segment spans residues 440 to 464 (CTSWNGEDLALLVPEEVSSIDSVDS).

The protein belongs to the major facilitator superfamily. SLC46A family.

Its subcellular location is the lysosome membrane. It catalyses the reaction estrone 3-sulfate(out) + n H(+)(out) = estrone 3-sulfate(in) + n H(+)(in). It carries out the reaction 25-hydroxyvitamin D3 sulfate(out) + n H(+)(out) = 25-hydroxyvitamin D3 sulfate(in) + n H(+)(in). The catalysed reaction is cholate(out) + n H(+)(out) = cholate(in) + n H(+)(in). The enzyme catalyses glycocholate(out) + n H(+)(out) = glycocholate(in) + n H(+)(in). It catalyses the reaction taurocholate(out) + n H(+)(out) = taurocholate(in) + n H(+)(in). It carries out the reaction dehydroepiandrosterone 3-sulfate(out) + n H(+)(out) = dehydroepiandrosterone 3-sulfate(in) + n H(+)(in). Its function is as follows. Lysosomal proton-coupled steroid conjugate and bile acid transporter. Preferentially recognizes lipophilic steroid conjugates or bile acis as endogenous substrates and seems to mediate escape from lysosomes to the cytoplasm. Modulates hepatic cytosolic copper homeostasis, maybe acting as a lysosomal copper transporter and sequestering copper ions in the lysosome. The polypeptide is Lysosomal proton-coupled steroid conjugate and bile acid symporter SLC46A3 (SLC46A3) (Gallus gallus (Chicken)).